The following is a 567-amino-acid chain: Sensor histidine kinase MtrB (567 aa).

The span at 1–15 (MIFGSRRRIRGRRGR) shows a compositional bias: basic residues. Residues 1-20 (MIFGSRRRIRGRRGRSGPMT) form a disordered region. A run of 2 helical transmembrane segments spans residues 42–62 (VVALTLGLSLAVILALGFVLT) and 213–233 (GTMATGGLVLLVLLAGIALLV). Residues 235–287 (RQVVVPVRSASRIAERFAEGHLSERMPVRGEDDMARLAVSFNDMAESLSRQIA) form the HAMP domain. Positions 302–519 (DVSHELRTPL…CFRLTLPLVR (218 aa)) constitute a Histidine kinase domain. Position 305 is a phosphohistidine; by autocatalysis (His305). A disordered region spans residues 526-567 (SPLPMKPIPQPVLQPVAQPNPQPMPPEYKERQRPREHAEWSG). Over residues 529–551 (PMKPIPQPVLQPVAQPNPQPMPP) the composition is skewed to pro residues. Residues 552–567 (EYKERQRPREHAEWSG) are compositionally biased toward basic and acidic residues.

The protein resides in the cell membrane. The enzyme catalyses ATP + protein L-histidine = ADP + protein N-phospho-L-histidine.. Functionally, member of the two-component regulatory system MtrA/MtrB. Seems to function as a membrane-associated protein kinase that phosphorylates MtrA in response to environmental signals. This is Sensor histidine kinase MtrB (mtrB) from Mycobacterium bovis (strain ATCC BAA-935 / AF2122/97).